The following is a 98-amino-acid chain: Putative membrane protein insertion efficiency factor (98 aa).

The protein belongs to the UPF0161 family.

The protein resides in the cell inner membrane. In terms of biological role, could be involved in insertion of integral membrane proteins into the membrane. This is Putative membrane protein insertion efficiency factor from Cupriavidus pinatubonensis (strain JMP 134 / LMG 1197) (Cupriavidus necator (strain JMP 134)).